A 578-amino-acid polypeptide reads, in one-letter code: Putative multidrug export ATP-binding/permease protein SAB1799c (578 aa).

Over 1–15 (MIKRYLQFVKPYKYR) the chain is Cytoplasmic. The chain crosses the membrane as a helical span at residues 16-36 (IFATIIVGIIKFGIPMLIPLL). The region spanning 16 to 306 (IFATIIVGII…LVASFTTLTQ (291 aa)) is the ABC transmembrane type-1 domain. Residues 37-59 (IKYAIDGVINNHALTTDEKVHHL) are Extracellular-facing. Residues 60 to 80 (TIAIGIALFIFVIVRPPIEFI) form a helical membrane-spanning segment. At 81–138 (RQYLAQWTSNKILYDIRKKLYNHLQALSARFYANNQVGQVISRVINDVEQTKDFILTG) the chain is on the cytoplasmic side. Residues 139 to 159 (LMNIWLDCITIIIALSIMFFL) traverse the membrane as a helical segment. At 160 to 162 (DVK) the chain is on the extracellular side. A helical transmembrane segment spans residues 163 to 183 (LTLAALFIFPFYILTVYVFFG). The Cytoplasmic portion of the chain corresponds to 184-242 (RLRKLTRERSQALAEVQGFLHERVQGISVVKSFAIEDNEAKNFDKKNANFLTRALKHTR). A helical transmembrane segment spans residues 243–262 (WNAYSFATINTVTDIGPIIV). The Extracellular portion of the chain corresponds to 263–267 (IGVGA). A helical transmembrane segment spans residues 268-287 (YLAISGSITVGTLAAFVGYL). Topologically, residues 288 to 578 (ELLFGPLRRL…YEHLYSIQNL (291 aa)) are cytoplasmic. The 236-residue stretch at 340–575 (IDIYHVNFQY…QGAYEHLYSI (236 aa)) folds into the ABC transporter domain. 374–381 (GMSGGGKS) is a binding site for ATP.

It belongs to the ABC transporter superfamily. Homodimer.

It is found in the cell membrane. May be involved in multidrug export. Transmembrane domains (TMD) form a pore in the cell membrane and the ATP-binding domain (NBD) is responsible for energy generation. In Staphylococcus aureus (strain bovine RF122 / ET3-1), this protein is Putative multidrug export ATP-binding/permease protein SAB1799c.